The chain runs to 162 residues: Catabolic 3-dehydroquinase (162 aa).

Tyrosine 24 (proton acceptor) is an active-site residue. Positions 88, 94, and 101 each coordinate substrate. Histidine 114 functions as the Proton donor in the catalytic mechanism. Substrate contacts are provided by residues 115 to 116 and arginine 125; that span reads VS.

The protein belongs to the type-II 3-dehydroquinase family. Homododecamer. Adopts a ring-like structure, composed of an arrangement of two hexameric rings stacked on top of one another.

It catalyses the reaction 3-dehydroquinate = 3-dehydroshikimate + H2O. It participates in aromatic compound metabolism; 3,4-dihydroxybenzoate biosynthesis; 3,4-dihydroxybenzoate from 3-dehydroquinate: step 1/2. Functionally, is involved in the catabolism of quinate. Allows the utilization of quinate as carbon source via the beta-ketoadipate pathway. The protein is Catabolic 3-dehydroquinase of Podospora anserina (strain S / ATCC MYA-4624 / DSM 980 / FGSC 10383) (Pleurage anserina).